The chain runs to 209 residues: MIRAIFGGTFDPIHNGHLQTAAALVKELGISTLALMPSAVPPHRPQPDASPEQRLDMVKLASQYHKAFTVEDWELRQDRPSFTANTLSEFKTQFPDDTLLFVMGMDSLMSLHRWHHWCQLIECAHLVVMPRAGVPFNPKNDELKEFISVHLTRDKNALNTQSQGLLYIAETPMVDVSATELRKQLQQREKNLPLPSNVYNYIRQHQLYL.

This sequence belongs to the NadD family.

It carries out the reaction nicotinate beta-D-ribonucleotide + ATP + H(+) = deamido-NAD(+) + diphosphate. It functions in the pathway cofactor biosynthesis; NAD(+) biosynthesis; deamido-NAD(+) from nicotinate D-ribonucleotide: step 1/1. Catalyzes the reversible adenylation of nicotinate mononucleotide (NaMN) to nicotinic acid adenine dinucleotide (NaAD). The protein is Probable nicotinate-nucleotide adenylyltransferase of Idiomarina loihiensis (strain ATCC BAA-735 / DSM 15497 / L2-TR).